The sequence spans 730 residues: 1,4-alpha-glucan branching enzyme GlgB (730 aa).

Asp-405 acts as the Nucleophile in catalysis. The active-site Proton donor is Glu-458.

The protein belongs to the glycosyl hydrolase 13 family. GlgB subfamily. Monomer.

It catalyses the reaction Transfers a segment of a (1-&gt;4)-alpha-D-glucan chain to a primary hydroxy group in a similar glucan chain.. Its pathway is glycan biosynthesis; glycogen biosynthesis. Catalyzes the formation of the alpha-1,6-glucosidic linkages in glycogen by scission of a 1,4-alpha-linked oligosaccharide from growing alpha-1,4-glucan chains and the subsequent attachment of the oligosaccharide to the alpha-1,6 position. The chain is 1,4-alpha-glucan branching enzyme GlgB from Haemophilus influenzae (strain 86-028NP).